A 327-amino-acid polypeptide reads, in one-letter code: Aspartate carbamoyltransferase catalytic subunit (327 aa).

Residues Arg73 and Thr74 each coordinate carbamoyl phosphate. Position 101 (Lys101) interacts with L-aspartate. Carbamoyl phosphate-binding residues include Arg123, His153, and Gln156. L-aspartate is bound by residues Arg186 and Arg241. Carbamoyl phosphate is bound by residues Gly282 and Pro283.

This sequence belongs to the aspartate/ornithine carbamoyltransferase superfamily. ATCase family. As to quaternary structure, heterododecamer (2C3:3R2) of six catalytic PyrB chains organized as two trimers (C3), and six regulatory PyrI chains organized as three dimers (R2).

It carries out the reaction carbamoyl phosphate + L-aspartate = N-carbamoyl-L-aspartate + phosphate + H(+). It functions in the pathway pyrimidine metabolism; UMP biosynthesis via de novo pathway; (S)-dihydroorotate from bicarbonate: step 2/3. Its function is as follows. Catalyzes the condensation of carbamoyl phosphate and aspartate to form carbamoyl aspartate and inorganic phosphate, the committed step in the de novo pyrimidine nucleotide biosynthesis pathway. This is Aspartate carbamoyltransferase catalytic subunit from Acidithiobacillus ferrooxidans (strain ATCC 23270 / DSM 14882 / CIP 104768 / NCIMB 8455) (Ferrobacillus ferrooxidans (strain ATCC 23270)).